The sequence spans 751 residues: Cyanobacterial phytochrome B (751 aa).

Residue C17 participates in a tetrapyrrole binding. A chromophore binding domain region spans residues 22–511 (IHIPGLIQPH…RSAIIGIVLQ (490 aa)). Residues 152-320 (TTTEISQILA…MTSVEMSAKE (169 aa)) form the GAF domain. Positions 536–751 (IASHDLKEPL…STFYFTLQDV (216 aa)) constitute a Histidine kinase domain. The residue at position 539 (H539) is a Phosphohistidine; by autocatalysis.

It in the N-terminal section; belongs to the phytochrome family. Post-translationally, contains one covalently linked tetrapyrrole chromophore.

The catalysed reaction is ATP + protein L-histidine = ADP + protein N-phospho-L-histidine.. Photoreceptor which exists in two forms that are reversibly interconvertible by light: the R form that absorbs maximally in the red region of the spectrum and the FR form that absorbs maximally in the far-red region. In Nostoc sp. (strain PCC 7120 / SAG 25.82 / UTEX 2576), this protein is Cyanobacterial phytochrome B (bphB).